We begin with the raw amino-acid sequence, 264 residues long: MIHSKKLTLGICLVLLIILIVGYVIMTKTNGRNAQIKDTFNQTLKLYPTKNLDDFYDKEGFRDQEFKKGDKGTWIVNSEMVIEPKGKDMETRGMVLYINRNTRTTKGYYFISEMTDDSNGRPKDDEKRYPVKMEHNKIIPTKPLPNDKLKKEIENFKFFVQYGNFKDINDYKDGDISYNPNVPSYSAKYQLNNDDYNVQQLRKRYDIPTKQAPKLLLKGDGDLKGSSVGSRSLEFTFVENKEENIYFTDSVQYTPSEDTRYESN.

Residues 7 to 27 form a helical membrane-spanning segment; sequence LTLGICLVLLIILIVGYVIMT.

This sequence belongs to the staphylococcal tandem lipoprotein family.

It is found in the cell membrane. This is an uncharacterized protein from Staphylococcus aureus (strain NCTC 8325 / PS 47).